The chain runs to 307 residues: Protoheme IX farnesyltransferase (307 aa).

8 helical membrane-spanning segments follow: residues 32 to 52 (MGIV…ALHF), 65 to 85 (FFTI…NNYI), 108 to 128 (PGFA…FLLL), 131 to 151 (PMAV…YTLW), 158 to 178 (LNTV…WAAI), 186 to 206 (IAWM…LALA), 251 to 271 (LGIT…ALGL), and 287 to 307 (FVYS…VTFF).

Belongs to the UbiA prenyltransferase family. Protoheme IX farnesyltransferase subfamily. In terms of assembly, interacts with CtaA.

Its subcellular location is the cell membrane. It catalyses the reaction heme b + (2E,6E)-farnesyl diphosphate + H2O = Fe(II)-heme o + diphosphate. It participates in porphyrin-containing compound metabolism; heme O biosynthesis; heme O from protoheme: step 1/1. Converts heme B (protoheme IX) to heme O by substitution of the vinyl group on carbon 2 of heme B porphyrin ring with a hydroxyethyl farnesyl side group. The polypeptide is Protoheme IX farnesyltransferase (Bacillus mycoides (strain KBAB4) (Bacillus weihenstephanensis)).